The chain runs to 215 residues: Pyrrolidone-carboxylate peptidase (215 aa).

Residues glutamate 80, cysteine 143, and histidine 167 contribute to the active site.

Belongs to the peptidase C15 family. In terms of assembly, homotetramer.

Its subcellular location is the cytoplasm. It catalyses the reaction Release of an N-terminal pyroglutamyl group from a polypeptide, the second amino acid generally not being Pro.. Functionally, removes 5-oxoproline from various penultimate amino acid residues except L-proline. This Bacillus anthracis protein is Pyrrolidone-carboxylate peptidase.